We begin with the raw amino-acid sequence, 896 residues long: DNA mismatch repair protein MutS (896 aa).

638-645 (GPNMSGKS) contributes to the ATP binding site.

It belongs to the DNA mismatch repair MutS family.

Its function is as follows. This protein is involved in the repair of mismatches in DNA. It is possible that it carries out the mismatch recognition step. This protein has a weak ATPase activity. The polypeptide is DNA mismatch repair protein MutS (Fusobacterium nucleatum subsp. nucleatum (strain ATCC 25586 / DSM 15643 / BCRC 10681 / CIP 101130 / JCM 8532 / KCTC 2640 / LMG 13131 / VPI 4355)).